The following is a 507-amino-acid chain: Glycerol kinase (507 aa).

Position 14 (Thr-14) interacts with ADP. ATP-binding residues include Thr-14, Thr-15, and Ser-16. Thr-14 is a sn-glycerol 3-phosphate binding site. Arg-18 lines the ADP pocket. Residues Arg-84, Glu-85, Tyr-137, and Asp-247 each coordinate sn-glycerol 3-phosphate. Arg-84, Glu-85, Tyr-137, Asp-247, and Gln-248 together coordinate glycerol. The ADP site is built by Thr-269 and Gly-312. Residues Thr-269, Gly-312, Gln-316, and Gly-413 each contribute to the ATP site. Gly-413 and Asn-417 together coordinate ADP.

This sequence belongs to the FGGY kinase family.

It carries out the reaction glycerol + ATP = sn-glycerol 3-phosphate + ADP + H(+). Its pathway is polyol metabolism; glycerol degradation via glycerol kinase pathway; sn-glycerol 3-phosphate from glycerol: step 1/1. With respect to regulation, inhibited by fructose 1,6-bisphosphate (FBP). Key enzyme in the regulation of glycerol uptake and metabolism. Catalyzes the phosphorylation of glycerol to yield sn-glycerol 3-phosphate. This is Glycerol kinase from Psychromonas ingrahamii (strain DSM 17664 / CCUG 51855 / 37).